We begin with the raw amino-acid sequence, 561 residues long: Potassium-transporting ATPase potassium-binding subunit (561 aa).

Helical transmembrane passes span 4–24, 65–85, 133–153, 177–197, 253–273, 285–305, 380–400, 417–437, 484–504, and 528–548; these read IVMQDAFFVVLLLVLAVPLGI, AVSVLAFSAVGFVFVMAVLML, IGLTVQNFVSAATGIAVLFAV, LYILLPLSLILALLLVSQGVV, FTNLIEMLAILLIPVALVVMF, AIMTAMMIVFVIGVVAITISE, GLYGMIGFIILTVFIAGLLVG, MVCLLILVPPLLTLFGTAVAV, MVGAVMMLLARFIPLVAALYL, and FIGLLIGVVVLVGALSFLPAL.

It belongs to the KdpA family. In terms of assembly, the system is composed of three essential subunits: KdpA, KdpB and KdpC.

The protein resides in the cell membrane. In terms of biological role, part of the high-affinity ATP-driven potassium transport (or Kdp) system, which catalyzes the hydrolysis of ATP coupled with the electrogenic transport of potassium into the cytoplasm. This subunit binds the extracellular potassium ions and delivers the ions to the membrane domain of KdpB through an intramembrane tunnel. In Listeria monocytogenes serotype 4b (strain F2365), this protein is Potassium-transporting ATPase potassium-binding subunit.